Consider the following 887-residue polypeptide: MNELDKNYSPNEIEEKWYKIWEDSKYFAASLSSEKENYSIVIPPPNVTGILHMGHVLNNSIQDTLIRYNRMTGKNTLWMPGCDHAGIATQNKVERKLAEDGLKKEDIGREKFLEMTWDWKEKYGGIITKQLRKLGASLDWDRERFTMDEGLSYAVRKIFNDLYHDGLIYQGEYMVNWCPSCGTALADDEVDHEEKDGHLWQIKYPVKDSDEYIIIATSRPETMLADVAVAVHPEDERYKHLIGKTLILPLVNREIPVIADEYVDKEFGTGALKITPAHDPNDYNLGKKYNLPIINMLTPDGKIVEDYPKYAGLDRFEARKKIVEDLKAQDLFIKTEHLHHAVGQCYRCQTVIEPRVSPQWFVKMKPLAEKALEVVRNGEVKILPKRMEKIYYNWLENIRDWCISRQIWWGHRIPAWYGPDRHVFVAMDEAEAKEQAKKHYGHDVELSQEEDVLDTWFSSALWPFSTMGWPEKTKELDLFYPTNTLVTGADIIFFWVARMIMFGMYELKKIPFKNVFFHGIVRDEIGRKMSKSLGNSPDPLDLIKEYGVDAIRFSMIYNTSQGQDVHFSTDLLGMGRNFANKIWNATRFVIMNLKGFDVKSVDKTKLDYELVDKWIISRLNETAKDVKDCLEKFELDNAAKAVYEFLRGDFCDWYVEIAKIRLYNDDEDKKISKLTAQYMLWTILEQGLRLLHPFMPFITEEIWQKIKVDGDTIMLQQYPVADDSLIDVKIEKSFEYIKEVVSSLRNIRAEKGISPAKPAKVVVSTSNSEELETLEKNELFIKKLANLEELTCGTDLEAPSQSSLRVAGNSSVYMILTGLLNNEAEIKKINEQLAKLEKELEPVNRKLSDEKFTSKAPQHIIDRELRIQKEYQDKIKKLKESLKSFEE.

Positions 45-55 (PNVTGILHMGH) match the 'HIGH' region motif. A 'KMSKS' region motif is present at residues 528-532 (KMSKS). Lysine 531 lines the ATP pocket. Residues 817–887 (TGLLNNEAEI…LKESLKSFEE (71 aa)) adopt a coiled-coil conformation.

Belongs to the class-I aminoacyl-tRNA synthetase family. ValS type 1 subfamily. Monomer.

The protein localises to the cytoplasm. It catalyses the reaction tRNA(Val) + L-valine + ATP = L-valyl-tRNA(Val) + AMP + diphosphate. Its function is as follows. Catalyzes the attachment of valine to tRNA(Val). As ValRS can inadvertently accommodate and process structurally similar amino acids such as threonine, to avoid such errors, it has a 'posttransfer' editing activity that hydrolyzes mischarged Thr-tRNA(Val) in a tRNA-dependent manner. The protein is Valine--tRNA ligase of Fusobacterium nucleatum subsp. nucleatum (strain ATCC 25586 / DSM 15643 / BCRC 10681 / CIP 101130 / JCM 8532 / KCTC 2640 / LMG 13131 / VPI 4355).